A 65-amino-acid chain; its full sequence is UPF0434 protein HS_0657 (65 aa).

It belongs to the UPF0434 family.

The chain is UPF0434 protein HS_0657 from Histophilus somni (strain 129Pt) (Haemophilus somnus).